Reading from the N-terminus, the 116-residue chain is Dynein light chain Tctex-type 3 (116 aa).

3'-nitrotyrosine is present on Y4.

Belongs to the dynein light chain Tctex-type family. Homodimer. The cytoplasmic dynein 1 complex consists of two catalytic heavy chains (HCs) and a number of non-catalytic subunits presented by intermediate chains (ICs), light intermediate chains (LICs) and light chains (LCs); the composition seems to vary in respect to the IC, LIC and LC composition. The heavy chain homodimer serves as a scaffold for the probable homodimeric assembly of the respective non-catalytic subunits. The ICs and LICs bind directly to the HC dimer and the LCs assemble on the IC dimer. DYNLT1 and DYNLT3 compete for association with dynein IC (DYNC1I1 or DYNC1I2). Self-associates. Interacts with DYNC1I1 and DYNC1I2. Interacts with BUB3. Interacts with SATB1 in nucleus to form complex with matrix attachment regions (MARs) of DNA.

Its subcellular location is the nucleus. It localises to the cytoplasm. The protein resides in the cytoskeleton. It is found in the chromosome. The protein localises to the centromere. Its subcellular location is the kinetochore. Functionally, acts as one of several non-catalytic accessory components of the cytoplasmic dynein 1 complex that are thought to be involved in linking dynein to cargos and to adapter proteins that regulate dynein function. Cytoplasmic dynein 1 acts as a motor for the intracellular retrograde motility of vesicles and organelles along microtubules. Probably binds BUB3 as part of transport cargo. Required for the efficient progression through mitosis. The protein is Dynein light chain Tctex-type 3 (DYNLT3) of Homo sapiens (Human).